Reading from the N-terminus, the 409-residue chain is Putative actin-fragmin kinase DDB_G0268812 (409 aa).

The segment at M1–N45 is disordered. The stretch at R5–N46 forms a coiled coil. Residues N13–N45 are compositionally biased toward low complexity.

Belongs to the protein kinase superfamily. AFK Ser/Thr protein kinase family.

The polypeptide is Putative actin-fragmin kinase DDB_G0268812 (Dictyostelium discoideum (Social amoeba)).